The following is a 219-amino-acid chain: Segregation and condensation protein B (219 aa).

Positions 193 to 219 are disordered; sequence SLFAGGEEPSAEAADGGAGESTHGEEE. Low complexity predominate over residues 196–207; that stretch reads AGGEEPSAEAAD.

Belongs to the ScpB family. As to quaternary structure, homodimer. Homodimerization may be required to stabilize the binding of ScpA to the Smc head domains. Component of a cohesin-like complex composed of ScpA, ScpB and the Smc homodimer, in which ScpA and ScpB bind to the head domain of Smc. The presence of the three proteins is required for the association of the complex with DNA.

It is found in the cytoplasm. Functionally, participates in chromosomal partition during cell division. May act via the formation of a condensin-like complex containing Smc and ScpA that pull DNA away from mid-cell into both cell halves. This is Segregation and condensation protein B from Symbiobacterium thermophilum (strain DSM 24528 / JCM 14929 / IAM 14863 / T).